The sequence spans 102 residues: NADH-quinone oxidoreductase subunit K (102 aa).

The next 3 membrane-spanning stretches (helical) occupy residues 5–25 (LSHY…GIFL), 31–51 (IVIL…MVAF), and 65–85 (LFIL…LVVF).

The protein belongs to the complex I subunit 4L family. As to quaternary structure, NDH-1 is composed of 14 different subunits. Subunits NuoA, H, J, K, L, M, N constitute the membrane sector of the complex.

It is found in the cell inner membrane. The enzyme catalyses a quinone + NADH + 5 H(+)(in) = a quinol + NAD(+) + 4 H(+)(out). In terms of biological role, NDH-1 shuttles electrons from NADH, via FMN and iron-sulfur (Fe-S) centers, to quinones in the respiratory chain. The immediate electron acceptor for the enzyme in this species is believed to be ubiquinone. Couples the redox reaction to proton translocation (for every two electrons transferred, four hydrogen ions are translocated across the cytoplasmic membrane), and thus conserves the redox energy in a proton gradient. The sequence is that of NADH-quinone oxidoreductase subunit K from Rhizobium johnstonii (strain DSM 114642 / LMG 32736 / 3841) (Rhizobium leguminosarum bv. viciae).